We begin with the raw amino-acid sequence, 127 residues long: Large ribosomal subunit protein bL20 (127 aa).

This sequence belongs to the bacterial ribosomal protein bL20 family.

Its function is as follows. Binds directly to 23S ribosomal RNA and is necessary for the in vitro assembly process of the 50S ribosomal subunit. It is not involved in the protein synthesizing functions of that subunit. The polypeptide is Large ribosomal subunit protein bL20 (Corynebacterium aurimucosum (strain ATCC 700975 / DSM 44827 / CIP 107346 / CN-1) (Corynebacterium nigricans)).